Consider the following 574-residue polypeptide: Serine/threonine-protein kinase B (574 aa).

One can recognise a Protein kinase domain in the interval Tyr34–Tyr301. Residues Leu40 to Thr48 and Lys65 contribute to the ATP site. Catalysis depends on Asp163, which acts as the Proton acceptor. The tract at residues Gly319–Asp407 is disordered. The segment covering Thr343–Lys364 has biased composition (polar residues). 2 Pentapeptide repeat domains span residues Gln454–Lys493 and Ala504–Gly543.

This sequence belongs to the protein kinase superfamily. Ser/Thr protein kinase family. Post-translationally, autophosphorylated.

The catalysed reaction is L-seryl-[protein] + ATP = O-phospho-L-seryl-[protein] + ADP + H(+). It catalyses the reaction L-threonyl-[protein] + ATP = O-phospho-L-threonyl-[protein] + ADP + H(+). Its function is as follows. Protein kinase required for cell motility, but not for phototaxis. In Synechocystis sp. (strain ATCC 27184 / PCC 6803 / Kazusa), this protein is Serine/threonine-protein kinase B (spkB).